The sequence spans 511 residues: MAFQQGVLSRCSGVFRHHVGHSRHINNILYRHAIAFASIAPRIPKSSFHTSAIRNNEAFKDPYDTLGLKKSATGAEIKKAYYKLAKKYHPDINKEPDAEKKFHDLQNAYEILSDETKRQQYDQFGPAAFGGGGAAGGAGGGSGSPFGSQFHDFSGFTSAGGSPFGGINFEDLFGAAFGGGGRGSGGASRSSSMFRQYRGDPIEIVHKVSFKDAVFGSKNVQLRFSALDPCSTCSGTGMKPNTHKVSCSTCHGTGTTVHIRGGFQMMSTCPTCNGEGTMKRPQDNCTKCHGEGVQVNRAKTITVDLPHGLQDGDVVRIPGQGSYPDIAVEADLKDSVKLSRGDILVRIRVDKDPNFSIKNKYDIWYDKEIPITTAALGGTVTIPTVEGQKIRIKVAPGTQYNQVISIPNMGVPKTSTIRGDMKVQYKIVVKKPQSLAEKCLWEALADVTNDDMAKKTMQPGTAAGTAINEEILKKQKQEEEKHAKKDDDNTLKRLENFITNTFRKIKGDKKN.

A mitochondrion-targeting transit peptide spans 1–55 (MAFQQGVLSRCSGVFRHHVGHSRHINNILYRHAIAFASIAPRIPKSSFHTSAIRN). In terms of domain architecture, J spans 59–127 (FKDPYDTLGL…RQQYDQFGPA (69 aa)). The CR-type zinc finger occupies 217 to 297 (SKNVQLRFSA…CHGEGVQVNR (81 aa)). CXXCXGXG motif repeat units follow at residues 230-237 (CSTCSGTG), 247-254 (CSTCHGTG), 269-276 (CPTCNGEG), and 285-292 (CTKCHGEG).

The protein localises to the mitochondrion. Its function is as follows. Plays a role in mitochondrial biogenesis and protein folding. The polypeptide is DnaJ homolog 1, mitochondrial (MDJ1) (Saccharomyces cerevisiae (strain ATCC 204508 / S288c) (Baker's yeast)).